Here is a 418-residue protein sequence, read N- to C-terminus: Histidinol dehydrogenase (418 aa).

Tyr-119, Gln-180, and Asn-203 together coordinate NAD(+). Substrate contacts are provided by Thr-226, Gln-248, and His-251. 2 residues coordinate Zn(2+): Gln-248 and His-251. Residues Glu-316 and His-317 each act as proton acceptor in the active site. Residues His-317, Asp-350, Glu-404, and His-409 each coordinate substrate. Asp-350 lines the Zn(2+) pocket. His-409 provides a ligand contact to Zn(2+).

The protein belongs to the histidinol dehydrogenase family. Zn(2+) is required as a cofactor.

It catalyses the reaction L-histidinol + 2 NAD(+) + H2O = L-histidine + 2 NADH + 3 H(+). It participates in amino-acid biosynthesis; L-histidine biosynthesis; L-histidine from 5-phospho-alpha-D-ribose 1-diphosphate: step 9/9. Its function is as follows. Catalyzes the sequential NAD-dependent oxidations of L-histidinol to L-histidinaldehyde and then to L-histidine. This is Histidinol dehydrogenase from Staphylococcus aureus (strain MRSA252).